The sequence spans 323 residues: D-alanine--D-alanine ligase (323 aa).

Residues 121 to 317 form the ATP-grasp domain; sequence RIWFLTNNIN…FTNLIEEIIK (197 aa). 147–199 is an ATP binding site; the sequence is PMKRPYVIKPLAQGSSIGVEVIFAEDDFNFADYDFPYGDQVIIEQYIKGQGRE. Mg(2+) is bound by residues E270, E284, and N286.

Belongs to the D-alanine--D-alanine ligase family. Requires Mg(2+) as cofactor. Mn(2+) is required as a cofactor.

It localises to the cytoplasm. It carries out the reaction 2 D-alanine + ATP = D-alanyl-D-alanine + ADP + phosphate + H(+). The protein operates within cell wall biogenesis; peptidoglycan biosynthesis. Cell wall formation. The sequence is that of D-alanine--D-alanine ligase from Rickettsia peacockii (strain Rustic).